The chain runs to 455 residues: Cysteinylglycine-S-conjugate dipeptidase (455 aa).

His92 contributes to the Zn(2+) binding site. The active site involves Asp94. Residue Asp125 participates in Zn(2+) binding. The active-site Proton acceptor is Glu158. Zn(2+) contacts are provided by Glu159, Glu163, and His428.

Belongs to the peptidase M20F family. It depends on Zn(2+) as a cofactor.

It catalyses the reaction an S-substituted L-cysteinylglycine + H2O = an S-substituted L-cysteine + glycine. It carries out the reaction S-(1-hydroxy-3-methylhexan-3-yl)-L-cysteinylglycine + H2O = S-(1-hydroxy-3-methylhexan-3-yl)-L-cysteine + glycine. The enzyme catalyses S-benzyl-L-cysteinylglycine + H2O = S-benzyl-L-cysteine + glycine. In terms of biological role, metallopeptidase that hydrolyzes the Cys-Gly bond of Cys-Gly-S-conjugates. Involved in the formation of the human body odorant 3-methyl-3-sulfanylhexan-1-ol (3M3SH) from odorless axilla secretions. Catalyzes the hydrolysis of the Cys-Gly bond of the Cys-Gly-S-conjugate of 3M3SH, a key precursor secreted by apocrine glands in human axilla skin. The Cys-S-conjugate obtained is then cleaved by the Cys-S-conjugate beta-lyase MetC, which finally releases 3M3SH. The sequence is that of Cysteinylglycine-S-conjugate dipeptidase from Corynebacterium striatum.